Consider the following 413-residue polypeptide: MAGMGRTAREGARALRLATPEQRTAAIQAMAVAIREDADAILTANAKDLARAEANGVSGPMLDRLALDAARLEGVAAGVEAVAAVPDPVGVATSRWTRPNGLDIARVRTPIGVIAMIYESRPNVTADAAALCVRSGNAVILRGGSECIHSNLAIHAAIARGLQKAGLPTAAVQAVKTPDRAAVGMILAGLDRTIDLIIPRGGKSLVARVQAEARAPVLGHLEGLNHVFVHAAADLKKAVEVVVNAKLRRVSVCGSAETLLIDQAAADKLLPPIADALIKAGCELRGDAAARAIEPTMKKATVEDWTTEYLAPILSVAVVDGVAGAARHIASYGSGHTDAIITEDAAAAEAFIAEVDSAIVLVNASTQFADGGEFGFGAEIGIATDKLHARGPVGAEQLTTFKYVVRGTGQTRP.

This sequence belongs to the gamma-glutamyl phosphate reductase family.

It localises to the cytoplasm. The catalysed reaction is L-glutamate 5-semialdehyde + phosphate + NADP(+) = L-glutamyl 5-phosphate + NADPH + H(+). The protein operates within amino-acid biosynthesis; L-proline biosynthesis; L-glutamate 5-semialdehyde from L-glutamate: step 2/2. In terms of biological role, catalyzes the NADPH-dependent reduction of L-glutamate 5-phosphate into L-glutamate 5-semialdehyde and phosphate. The product spontaneously undergoes cyclization to form 1-pyrroline-5-carboxylate. This is Gamma-glutamyl phosphate reductase from Caulobacter vibrioides (strain ATCC 19089 / CIP 103742 / CB 15) (Caulobacter crescentus).